Reading from the N-terminus, the 416-residue chain is MMSAKTLTEKILSRASGKDVSPGDVIEAKVDLVAFHDLTGYHVIEVMEKANMIKVFDKSKLVIAFDHLAPPPDVRSAEIQGYIRKFVKSEGIPNFYDINYGILHEVMIEQYANPGQVILAADSHTTTSGAVGAFAQGMGASDIAAALITGKTWLVVPQPFKVVLEGKPAKWITGKDVALKLLGDFKADYFNGMTLEIFVKDPLSFPMDYRATVSNMGIEMNADALMFIPDQETKRYIKEMRGYEPELVTPDNGAKYVDEYTIQLDEMEPLVAAPHSVDNVKVVNELEGTPVDQVYIGSCTNGRLSDFEIAAKIMKGKKVKSRCIAIPASYRMFKEALERGYIQTLVDAGCIVTYGTCGPCLGGHFGIAGPGENIVSTSSRNFKGRMGSNEAKVYLSGPAVAAISALEGKITDPRVI.

Positions 299, 357, and 360 each coordinate [4Fe-4S] cluster.

Belongs to the aconitase/IPM isomerase family. LeuC type 2 subfamily. Heterodimer of LeuC and LeuD. Requires [4Fe-4S] cluster as cofactor.

It catalyses the reaction (2R,3S)-3-isopropylmalate = (2S)-2-isopropylmalate. The protein operates within amino-acid biosynthesis; L-leucine biosynthesis; L-leucine from 3-methyl-2-oxobutanoate: step 2/4. Its function is as follows. Catalyzes the isomerization between 2-isopropylmalate and 3-isopropylmalate, via the formation of 2-isopropylmaleate. The chain is 3-isopropylmalate dehydratase large subunit from Saccharolobus solfataricus (strain ATCC 35092 / DSM 1617 / JCM 11322 / P2) (Sulfolobus solfataricus).